Here is a 226-residue protein sequence, read N- to C-terminus: ATP-dependent dethiobiotin synthetase BioD (226 aa).

Residue 12 to 17 (GVGKTV) participates in ATP binding. Thr16 provides a ligand contact to Mg(2+). Lys37 is a catalytic residue. Thr41 is a substrate binding site. Residues Asp49, 108 to 111 (EGAG), and 197 to 199 (PAG) each bind ATP. The Mg(2+) site is built by Asp49 and Glu108.

Belongs to the dethiobiotin synthetase family. Homodimer. Requires Mg(2+) as cofactor.

The protein localises to the cytoplasm. It carries out the reaction (7R,8S)-7,8-diammoniononanoate + CO2 + ATP = (4R,5S)-dethiobiotin + ADP + phosphate + 3 H(+). It functions in the pathway cofactor biosynthesis; biotin biosynthesis; biotin from 7,8-diaminononanoate: step 1/2. Functionally, catalyzes a mechanistically unusual reaction, the ATP-dependent insertion of CO2 between the N7 and N8 nitrogen atoms of 7,8-diaminopelargonic acid (DAPA, also called 7,8-diammoniononanoate) to form a ureido ring. This chain is ATP-dependent dethiobiotin synthetase BioD, found in Mycobacterium avium (strain 104).